The following is a 386-amino-acid chain: Agamous-like MADS-box protein AGL103 (386 aa).

Residues 29 to 76 (SSSRATSLIKRQQTVFKKAKELSILCDIDVCVICYGSNGELKTWPEER) form the MADS-box domain.

As to quaternary structure, interacts with MEE14/CBP1.

The protein resides in the nucleus. In terms of biological role, probable transcription factor that may function in the maintenance of the proper function of the central cell in pollen tube attraction. The polypeptide is Agamous-like MADS-box protein AGL103 (Arabidopsis thaliana (Mouse-ear cress)).